We begin with the raw amino-acid sequence, 831 residues long: G-type lectin S-receptor-like serine/threonine-protein kinase At1g61390 (831 aa).

Residues 1 to 42 form the signal peptide; that stretch reads MYKLPQRNCADKQEYTVHMRKMGMVIFACLLLLIIFPTFGYA. Residues 43–162 form the Bulb-type lectin domain; it reads DINTSSPLSI…VSGKTLWKSF (120 aa). Residues 43 to 448 are Extracellular-facing; that stretch reads DINTSSPLSI…SSELAGSNRT (406 aa). 4 N-linked (GlcNAc...) asparagine glycosylation sites follow: Asn-45, Asn-71, Asn-106, and Asn-112. Positions 298 to 334 constitute an EGF-like; atypical domain; the sequence is PTSSCDLYRACGPFGLCVRSRNPKCICLKGFVPKSDD. 2 disulfide bridges follow: Cys-302-Cys-314 and Cys-308-Cys-322. N-linked (GlcNAc...) asparagine glycosylation is found at Asn-340, Asn-356, Asn-399, and Asn-446. The 87-residue stretch at 353–439 folds into the PAN domain; the sequence is CHTNSSTKTQ…GESLSLRLAS (87 aa). 2 disulfides stabilise this stretch: Cys-392–Cys-413 and Cys-396–Cys-402. A helical membrane pass occupies residues 449–469; that stretch reads KIILGTTVSLSIFVILVFAAY. Residues 470 to 831 are Cytoplasmic-facing; it reads KSWRYRTKQN…EITQSVIQGR (362 aa). In terms of domain architecture, Protein kinase spans 520-803; it reads FSSSNKLGQG…ELPSPKQPTF (284 aa). ATP is bound by residues 526–534 and Lys-548; that span reads LGQGGFGPV. Phosphoserine occurs at positions 554 and 569. Positions 609–626 are caM-binding; the sequence is TLKFEIDWQKRFNIIQGV. The active-site Proton acceptor is Asp-645. Phosphoserine occurs at positions 649 and 662. A Phosphothreonine modification is found at Thr-679. Phosphoserine is present on residues Ser-722 and Ser-814.

The protein belongs to the protein kinase superfamily. Ser/Thr protein kinase family.

It localises to the cell membrane. The enzyme catalyses L-seryl-[protein] + ATP = O-phospho-L-seryl-[protein] + ADP + H(+). It carries out the reaction L-threonyl-[protein] + ATP = O-phospho-L-threonyl-[protein] + ADP + H(+). In Arabidopsis thaliana (Mouse-ear cress), this protein is G-type lectin S-receptor-like serine/threonine-protein kinase At1g61390.